The sequence spans 631 residues: Putative ATP-dependent DNA helicase Q1 (631 aa).

Positions 118–293 (INAVMSKEDA…KDMLGIQAAL (176 aa)) constitute a Helicase ATP-binding domain. 131 to 138 (LSTGGGKS) lines the ATP pocket. The short motif at 237-240 (DEVH) is the DEVH box element. A Helicase C-terminal domain is found at 318-466 (CTEEIAKTIK…NLYNMVRYAA (149 aa)). Residues cysteine 471, cysteine 489, cysteine 493, and cysteine 496 each contribute to the Zn(2+) site. The segment at 610–631 (ESKSRKRKASSSVEEEDVMVLD) is disordered. Residues 622–631 (VEEEDVMVLD) are compositionally biased toward acidic residues.

It belongs to the helicase family. RecQ subfamily. Zn(2+) serves as cofactor.

The protein resides in the nucleus. The catalysed reaction is Couples ATP hydrolysis with the unwinding of duplex DNA by translocating in the 3'-5' direction.. The enzyme catalyses ATP + H2O = ADP + phosphate + H(+). Functionally, DNA helicase that may play a role in the repair of DNA that is damaged by ultraviolet light or other mutagens. Exhibits a magnesium-dependent ATP-dependent DNA-helicase activity that unwinds single- and double-stranded DNA in a 3'-5' direction. This Caenorhabditis elegans protein is Putative ATP-dependent DNA helicase Q1.